Consider the following 316-residue polypeptide: Neuroguidin (316 aa).

2 disordered regions span residues Ser143–Tyr172 and Ser280–His316. Over residues Ala145 to Ala157 the composition is skewed to acidic residues. Basic residues predominate over residues Lys297–His316.

It belongs to the SAS10 family. In terms of assembly, part of the small subunit (SSU) processome, composed of more than 70 proteins and the RNA chaperone small nucleolar RNA (snoRNA) U3.

It is found in the nucleus. It localises to the nucleolus. Its subcellular location is the chromosome. The protein resides in the centromere. The protein localises to the cytoplasm. It is found in the cell projection. It localises to the axon. Its subcellular location is the dendrite. The protein resides in the filopodium. Functionally, part of the small subunit (SSU) processome, first precursor of the small eukaryotic ribosomal subunit. During the assembly of the SSU processome in the nucleolus, many ribosome biogenesis factors, an RNA chaperone and ribosomal proteins associate with the nascent pre-rRNA and work in concert to generate RNA folding, modifications, rearrangements and cleavage as well as targeted degradation of pre-ribosomal RNA by the RNA exosome. Its dissociation from the complex determines the transition from state pre-A1 to state pre-A1*. May inhibit mRNA translation. The protein is Neuroguidin (ngdn) of Xenopus tropicalis (Western clawed frog).